A 339-amino-acid polypeptide reads, in one-letter code: MNKTAEELVESLRCASEGLTNALTSITVKVSFVFLATVILLSYYFAVLAIRALWNNNIFSNSTRLILIVCLLNSVVHQSTMMEIRIRQVYRSFVYSSEPCRLPFHFTDCEVELYFYYLTNYFSTYSVFSLTFDRLISYFFPKCYISYPYQVSISLLIIQLVFTLGTYYFGLYGVPKLGYVPICNYAPRLATNFVKINDFRTTIMVFCIIVTIFIYYLNVKSEKQIKRTSYSLGEQYLARENVATSQSVCILIVLQFVCISVSSFGVNYIKSIKSTLSDEEYNKIAPFVVGVTYANLCLPLVIYFKTKLTIRKRRIRIGVMTSVYGDVGEHINRLKKSWE.

Helical transmembrane passes span 30–50 (VSFVFLATVILLSYYFAVLAI), 113–132 (LYFYYLTNYFSTYSVFSLTF), 151–171 (VSISLLIIQLVFTLGTYYFGL), 199–219 (FRTTIMVFCIIVTIFIYYLNV), 249–269 (CILIVLQFVCISVSSFGVNYI), and 284–304 (IAPFVVGVTYANLCLPLVIYF).

The protein belongs to the nematode receptor-like protein sra family.

The protein localises to the membrane. The chain is Serpentine receptor class alpha-20 (sra-20) from Caenorhabditis elegans.